The sequence spans 78 residues: MAASAALSAAAAAAALSGLAVRLSRSAAARGSYGAFCKGLTRTLLTFFDLAWRLRMNFPYFYIVASVMLNVRLQVRIE.

The chain is Small integral membrane protein 10-like protein 2A from Homo sapiens (Human).